The following is a 209-amino-acid chain: Adenylate kinase (209 aa).

10-15 (GAGKGT) lines the ATP pocket. The interval 30–59 (STGDLFRAAIKEQTDLGKKVKAVIDSGALV) is NMP. AMP is bound by residues Thr-31, Arg-36, 57-59 (ALV), 85-88 (GFPR), and Gln-92. Positions 121–158 (GRRVCSSCGQSFHIEFVKPKKEGICDSCSGDLMIRPDD) are LID. Arg-122 is a binding site for ATP. Residues Cys-125 and Cys-128 each contribute to the Zn(2+) site. 131–132 (SF) serves as a coordination point for ATP. Residues Cys-145 and Cys-148 each coordinate Zn(2+). AMP is bound by residues Arg-155 and Arg-166. ATP is bound at residue Pro-194.

It belongs to the adenylate kinase family. Monomer.

It localises to the cytoplasm. It carries out the reaction AMP + ATP = 2 ADP. It participates in purine metabolism; AMP biosynthesis via salvage pathway; AMP from ADP: step 1/1. In terms of biological role, catalyzes the reversible transfer of the terminal phosphate group between ATP and AMP. Plays an important role in cellular energy homeostasis and in adenine nucleotide metabolism. This chain is Adenylate kinase, found in Treponema denticola (strain ATCC 35405 / DSM 14222 / CIP 103919 / JCM 8153 / KCTC 15104).